A 124-amino-acid chain; its full sequence is Small ribosomal subunit protein uS12 (124 aa).

The disordered stretch occupies residues 1 to 42 (MPTIQQLVRKGRRPKVNKTKSPALRGNPQQRGVCSRVYTTTP). A compositionally biased stretch (basic residues) spans 9–18 (RKGRRPKVNK). The span at 27 to 42 (NPQQRGVCSRVYTTTP) shows a compositional bias: polar residues. At aspartate 89 the chain carries 3-methylthioaspartic acid.

This sequence belongs to the universal ribosomal protein uS12 family. In terms of assembly, part of the 30S ribosomal subunit. Contacts proteins S8 and S17. May interact with IF1 in the 30S initiation complex.

Its function is as follows. With S4 and S5 plays an important role in translational accuracy. Interacts with and stabilizes bases of the 16S rRNA that are involved in tRNA selection in the A site and with the mRNA backbone. Located at the interface of the 30S and 50S subunits, it traverses the body of the 30S subunit contacting proteins on the other side and probably holding the rRNA structure together. The combined cluster of proteins S8, S12 and S17 appears to hold together the shoulder and platform of the 30S subunit. This Tropheryma whipplei (strain TW08/27) (Whipple's bacillus) protein is Small ribosomal subunit protein uS12.